Consider the following 3142-residue polypeptide: MATLEKLMKAFESLKSFQQQQQQQQQQQQQQQQQQQQQPPPPPPPPPPPQLPQPPPQAQPLLPQPQPPPPPPPPPPGPAVAEEPLHRPKKELSATKKDRVNHCLTICENIVAQSVRNSPEFQKLLGIAMELFLLCSDDAESDVRMVADECLNKVIKALMDSNLPRLQLELYKEIKKNGAPRSLRAALWRFAELAHLVRPQKCRPYLVNLLPCLTRTSKRPEESVQETLAAAVPKIMASFGNFANDNEIKVLLKAFIANLKSSSPTIRRTAAGSAVSICQHSRRTQYFYSWLLNVLLGLLVPVEDEHSTLLILGVLLTLRYLVPLLQQQVKDTSLKGSFGVTRKEMEVSPSAEQLVQVYELTLHHTQHQDHNVVTGALELLQQLFRTPPPELLQTLTAVGGIGQLTAAKEESGGRSRSGSIVELIAGGGSSCSPVLSRKQKGKVLLGEEEALEDDSESRSDVSSSALTASVKDEISGELAASSGVSTPGSAGHDIITEQPRSQHTLQADSVDLASCDLTSSATDGDEEDILSHSSSQVSAVPSDPAMDLNDGTQASSPISDSSQTTTEGPDSAVTPSDSSEIVLDGTDNQYLGLQIGQPQDEDEEATGILPDEASEAFRNSSMALQQAHLLKNMSHCRQPSDSSVDKFVLRDEATEPGDQENKPCRIKGDIGQSTDDDSAPLVHCVRLLSASFLLTGGKNVLVPDRDVRVSVKALALSCVGAAVALHPESFFSKLYKVPLDTTEYPEEQYVSDILNYIDHGDPQVRGATAILCGTLICSILSRSRFHVGDWMGTIRTLTGNTFSLADCIPLLRKTLKDESSVTCKLACTAVRNCVMSLCSSSYSELGLQLIIDVLTLRNSSYWLVRTELLETLAEIDFRLVSFLEAKAENLHRGAHHYTGLLKLQERVLNNVVIHLLGDEDPRVRHVAAASLIRLVPKLFYKCDQGQADPVVAVARDQSSVYLKLLMHETQPPSHFSVSTITRIYRGYNLLPSITDVTMENNLSRVIAAVSHELITSTTRALTFGCCEALCLLSTAFPVCIWSLGWHCGVPPLSASDESRKSCTVGMATMILTLLSSAWFPLDLSAHQDALILAGNLLAASAPKSLRSSWASEEEANPAATKQEEVWPALGDRALVPMVEQLFSHLLKVINICAHVLDDVAPGPAIKAALPSLTNPPSLSPIRRKGKEKEPGEQASVPLSPKKGSEASAASRQSDTSGPVTTSKSSSLGSFYHLPSYLKLHDVLKATHANYKVTLDLQNSTEKFGGFLRSALDVLSQILELATLQDIGKCVEEILGYLKSCFSREPMMATVCVQQLLKTLFGTNLASQFDGLSSNPSKSQGRAQRLGSSSVRPGLYHYCFMAPYTHFTQALADASLRNMVQAEQENDTSGWFDVLQKVSTQLKTNLTSVTKNRADKNAIHNHIRLFEPLVIKALKQYTTTTCVQLQKQVLDLLAQLVQLRVNYCLLDSDQVFIGFVLKQFEYIEVGQFRESEAIIPNIFFFLVLLSYERYHSKQIIGIPKIIQLCDGIMASGRKAVTHAIPALQPIVHDLFVLRGTNKADAGKELETQKEVVVSMLLRLIQYHQVLEMFILVLQQCHKENEDKWKRLSRQIADIILPMLAKQQMHIDSHEALGVLNTLFEILAPSSLRPVDMLLRSMFVTPNTMASVSTVQLWISGILAILRVLISQSTEDIVLSRIQELSFSPYLISCTVINRLRDGDSTSTLEEHSEGKQIKNLPEETFSRFLLQLVGILLEDIVTKQLKVEMSEQQHTFYCQELGTLLMCLIHIFKSGMFRRITAAATRLFRSDGCGGSFYTLDSLNLRARSMITTHPALVLLWCQILLLVNHTDYRWWAEVQQTPKRHSLSSTKLLSPQMSGEEEDSDLAAKLGMCNREIVRRGALILFCDYVCQNLHDSEHLTWLIVNHIQDLISLSHEPPVQDFISAVHRNSAASGLFIQAIQSRCENLSTPTMLKKTLQCLEGIHLSQSGAVLTLYVDRLLCTPFRVLARMVDILACRRVEMLLAANLQSSMAQLPMEELNRIQEYLQSSGLAQRHQRLYSLLDRFRLSTMQDSLSPSPPVSSHPLDGDGHVSLETVSPDKDWYVHLVKSQCWTRSDSALLEGAELVNRIPAEDMNAFMMNSEFNLSLLAPCLSLGMSEISGGQKSALFEAAREVTLARVSGTVQQLPAVHHVFQPELPAEPAAYWSKLNDLFGDAALYQSLPTLARALAQYLVVVSKLPSHLHLPPEKEKDIVKFVVATLEALSWHLIHEQIPLSLDLQAGLDCCCLALQLPGLWSVVSSTEFVTHACSLIYCVHFILEAVAVQPGEQLLSPERRTNTPKAISEEEEEVDPNTQNPKYITAACEMVAEMVESLQSVLALGHKRNSGVPAFLTPLLRNIIISLARLPLVNSYTRVPPLVWKLGWSPKPGGDFGTAFPEIPVEFLQEKEVFKEFIYRINTLGWTSRTQFEETWATLLGVLVTQPLVMEQEESPPEEDTERTQINVLAVQAITSLVLSAMTVPVAGNPAVSCLEQQPRNKPLKALDTRFGRKLSIIRGIVEQEIQAMVSKRENIATHHLYQAWDPVPSLSPATTGALISHEKLLLQINPERELGSMSYKLGQVSIHSVWLGNSITPLREEEWDEEEEEEADAPAPSSPPTSPVNSRKHRAGVDIHSCSQFLLELYSRWILPSSSARRTPAILISEVVRSLLVVSDLFTERNQFELMYVTLTELRRVHPSEDEILAQYLVPATCKAAAVLGMDKAVAEPVSRLLESTLRSSHLPSRVGALHGVLYVLECDLLDDTAKQLIPVISDYLLSNLKGIAHCVNIHSQQHVLVMCATAFYLIENYPLDVGPEFSASIIQMCGVMLSGSEESTPSIIYHCALRGLERLLLSEQLSRLDAESLVKLSVDRVNVHSPHRAMAALGLMLTCMYTGKEKVSPGRTSDPNPAAPDSESVIVAMERVSVLFDRIRKGFPCEARVVARILPQFLDDFFPPQDIMNKVIGEFLSNQQPYPQFMATVVYKVFQTLHSTGQSSMVRDWVMLSLSNFTQRAPVAMATWSLSCFFVSASTSPWVAAILPHVISRMGKLEQVDVNLFCLVATDFYRHQIEEELDRRAFQSVLEVVAAPGSPYHRLLTCLRNVHKVTTC.

Positions 3-13 (TLEKLMKAFES) are sufficient for interaction with TPR. Lys-9 carries the post-translational modification N6-acetyllysine. A disordered region spans residues 14 to 85 (LKSFQQQQQQ…PGPAVAEEPL (72 aa)). A compositionally biased stretch (low complexity) spans 18 to 37 (QQQQQQQQQQQQQQQQQQQQ). Residues 38–78 (QPPPPPPPPPPPQLPQPPPQAQPLLPQPQPPPPPPPPPPGP) are compositionally biased toward pro residues. N6-acetyllysine occurs at positions 176 and 234. HEAT repeat units follow at residues 204–241 (PYLV…SFGN), 246–283 (NEIK…HSRR), and 316–360 (LTLR…VYEL). Lys-343 is subject to N6-acetyllysine. Residues Ser-411, Ser-417, Ser-419, and Ser-432 each carry the phosphoserine modification. Lys-442 bears the N6-acetyllysine mark. A disordered region spans residues 447–469 (EEEALEDDSESRSDVSSSALTAS). The interval 491–502 (GHDIITEQPRSQ) is interaction with ZDHHC17. The tract at residues 517-583 (LTSSATDGDE…TPSDSSEIVL (67 aa)) is disordered. Over residues 531–545 (SHSSSQVSAVPSDPA) the composition is skewed to low complexity. Over residues 550–579 (DGTQASSPISDSSQTTTEGPDSAVTPSDSS) the composition is skewed to polar residues. The N-myristoyl glycine moiety is linked to residue Gly-551. Ser-640 and Ser-643 each carry phosphoserine. HEAT repeat units lie at residues 802–839 (FSLA…SLCS) and 902–940 (KLQE…KLFY). A disordered region spans residues 1176 to 1225 (PSLSPIRRKGKEKEPGEQASVPLSPKKGSEASAASRQSDTSGPVTTSKSS). Phosphoserine; by CDK5 is present on residues Ser-1179 and Ser-1199. The segment covering 1207–1225 (SAASRQSDTSGPVTTSKSS) has biased composition (polar residues). Ser-1870 and Ser-1874 each carry phosphoserine. The disordered stretch occupies residues 2330 to 2351 (ERRTNTPKAISEEEEEVDPNTQ). The Nuclear export signal motif lies at 2395–2404 (IIISLARLPL). Residues 2633 to 2662 (EEEWDEEEEEEADAPAPSSPPTSPVNSRKH) are disordered. Over residues 2634 to 2645 (EEWDEEEEEEAD) the composition is skewed to acidic residues.

This sequence belongs to the huntingtin family. As to quaternary structure, interacts with PFN1. Interacts through its N-terminus with PRPF40A. Interacts with PQBP1. Interacts with SETD2. Interacts with SH3GLB1. Interacts with SYVN. Interacts with TPR; the interaction is inhibited by forms of Huntingtin with expanded polyglutamine stretch. Interacts with ZDHHC13 (via ANK repeats). Interacts with ZDHHC17 (via ANK repeats). Interacts with F8A1/F8A2/F8A3. Found in a complex with F8A1/F8A2/F8A3, HTT and RAB5A; mediates the recruitment of HTT by RAB5A. Cleaved by caspases downstream of the polyglutamine stretch. The resulting N-terminal fragments are cytotoxic and provokes apoptosis. In terms of processing, forms with expanded polyglutamine expansion are specifically ubiquitinated by SYVN1, which promotes their proteasomal degradation. Post-translationally, phosphorylation at Ser-1179 and Ser-1199 by CDK5 in response to DNA damage in nuclei of neurons protects neurons against polyglutamine expansion as well as DNA damage mediated toxicity. Myristoylated at Gly-551, following proteolytic cleavage at Asp-550. Expressed in the brain cortex (at protein level). Widely expressed with the highest level of expression in the brain (nerve fibers, varicosities, and nerve endings). In the brain, the regions where it can be mainly found are the cerebellar cortex, the neocortex, the striatum, and the hippocampal formation.

It is found in the cytoplasm. The protein localises to the nucleus. The protein resides in the early endosome. It localises to the cytoplasmic vesicle. Its subcellular location is the autophagosome. May play a role in microtubule-mediated transport or vesicle function. In terms of biological role, promotes the formation of autophagic vesicles. The chain is Huntingtin (HTT) from Homo sapiens (Human).